Here is a 144-residue protein sequence, read N- to C-terminus: Large ribosomal subunit protein uL15 (144 aa).

Residues 1–44 form a disordered region; the sequence is MNLNELQPAAGSRHVRNRVGRGTSSGNGKTSGRGQKGQKARGKV. Over residues 23–35 the composition is skewed to gly residues; it reads TSSGNGKTSGRGQ.

The protein belongs to the universal ribosomal protein uL15 family. As to quaternary structure, part of the 50S ribosomal subunit.

Its function is as follows. Binds to the 23S rRNA. This chain is Large ribosomal subunit protein uL15, found in Leuconostoc mesenteroides subsp. mesenteroides (strain ATCC 8293 / DSM 20343 / BCRC 11652 / CCM 1803 / JCM 6124 / NCDO 523 / NBRC 100496 / NCIMB 8023 / NCTC 12954 / NRRL B-1118 / 37Y).